The following is a 233-amino-acid chain: 7-cyano-7-deazaguanine synthase (233 aa).

Residue 7-17 (LSGGLDSAVTS) participates in ATP binding. Residues Cys195, Cys206, Cys209, and Cys212 each contribute to the Zn(2+) site.

The protein belongs to the QueC family. Zn(2+) serves as cofactor.

It catalyses the reaction 7-carboxy-7-deazaguanine + NH4(+) + ATP = 7-cyano-7-deazaguanine + ADP + phosphate + H2O + H(+). Its pathway is purine metabolism; 7-cyano-7-deazaguanine biosynthesis. Functionally, catalyzes the ATP-dependent conversion of 7-carboxy-7-deazaguanine (CDG) to 7-cyano-7-deazaguanine (preQ(0)). The sequence is that of 7-cyano-7-deazaguanine synthase from Methanococcus maripaludis (strain C5 / ATCC BAA-1333).